The primary structure comprises 336 residues: Fructose-1,6-bisphosphatase class 1 (336 aa).

Residues Glu98, Asp117, Leu119, and Asp120 each coordinate Mg(2+). Substrate-binding positions include 120-123 (DGSS), Asn210, and Lys276. Glu282 contributes to the Mg(2+) binding site.

The protein belongs to the FBPase class 1 family. As to quaternary structure, homotetramer. It depends on Mg(2+) as a cofactor.

It is found in the cytoplasm. It catalyses the reaction beta-D-fructose 1,6-bisphosphate + H2O = beta-D-fructose 6-phosphate + phosphate. The protein operates within carbohydrate biosynthesis; gluconeogenesis. The protein is Fructose-1,6-bisphosphatase class 1 of Caulobacter vibrioides (strain ATCC 19089 / CIP 103742 / CB 15) (Caulobacter crescentus).